The following is a 185-amino-acid chain: Elongation factor P (185 aa).

Belongs to the elongation factor P family.

It is found in the cytoplasm. Its pathway is protein biosynthesis; polypeptide chain elongation. In terms of biological role, involved in peptide bond synthesis. Stimulates efficient translation and peptide-bond synthesis on native or reconstituted 70S ribosomes in vitro. Probably functions indirectly by altering the affinity of the ribosome for aminoacyl-tRNA, thus increasing their reactivity as acceptors for peptidyl transferase. In Desulfitobacterium hafniense (strain DSM 10664 / DCB-2), this protein is Elongation factor P.